We begin with the raw amino-acid sequence, 223 residues long: Deoxyribose-phosphate aldolase (223 aa).

The active-site Proton donor/acceptor is Asp-92. Lys-154 (schiff-base intermediate with acetaldehyde) is an active-site residue. Catalysis depends on Lys-182, which acts as the Proton donor/acceptor.

The protein belongs to the DeoC/FbaB aldolase family. DeoC type 1 subfamily.

The protein resides in the cytoplasm. The enzyme catalyses 2-deoxy-D-ribose 5-phosphate = D-glyceraldehyde 3-phosphate + acetaldehyde. Its pathway is carbohydrate degradation; 2-deoxy-D-ribose 1-phosphate degradation; D-glyceraldehyde 3-phosphate and acetaldehyde from 2-deoxy-alpha-D-ribose 1-phosphate: step 2/2. Its function is as follows. Catalyzes a reversible aldol reaction between acetaldehyde and D-glyceraldehyde 3-phosphate to generate 2-deoxy-D-ribose 5-phosphate. In Haemophilus influenzae (strain ATCC 51907 / DSM 11121 / KW20 / Rd), this protein is Deoxyribose-phosphate aldolase.